Here is a 426-residue protein sequence, read N- to C-terminus: Mediator of RNA polymerase II transcription subunit 1 (426 aa).

A disordered region spans residues 324–356 (VGDAPAPAAQPPLHRRRSSNKGCRRASAAESAT). Positions 336 to 347 (LHRRRSSNKGCR) are enriched in basic residues.

It belongs to the Mediator complex subunit 1 family. In terms of assembly, component of the Mediator complex.

Its subcellular location is the nucleus. In terms of biological role, component of the Mediator complex, a coactivator involved in the regulated transcription of nearly all RNA polymerase II-dependent genes. Mediator functions as a bridge to convey information from gene-specific regulatory proteins to the basal RNA polymerase II transcription machinery. Mediator is recruited to promoters by direct interactions with regulatory proteins and serves as a scaffold for the assembly of a functional preinitiation complex with RNA polymerase II and the general transcription factors. This chain is Mediator of RNA polymerase II transcription subunit 1 (MED1), found in Eremothecium gossypii (strain ATCC 10895 / CBS 109.51 / FGSC 9923 / NRRL Y-1056) (Yeast).